We begin with the raw amino-acid sequence, 121 residues long: Large ribosomal subunit protein bL31 (121 aa).

The large ribosomal subunit protein bL31 stretch occupies residues 1 to 97 (MKEGIHPDYK…AKENRAAKRA (97 aa)). Cys-16, Cys-18, Cys-36, and Cys-39 together coordinate Zn(2+). Over residues 65 to 80 (ATPAKAEPAKKAPAAE) the composition is skewed to low complexity. The tract at residues 65–121 (ATPAKAEPAKKAPAAEPAKKVEAAKENRAAKRAKAGKSKKSEAAPAAEAPAADAKPE) is disordered. A unknown region spans residues 74-121 (KKAPAAEPAKKVEAAKENRAAKRAKAGKSKKSEAAPAAEAPAADAKPE). Residues 81–93 (PAKKVEAAKENRA) show a composition bias toward basic and acidic residues. A compositionally biased stretch (low complexity) spans 107-121 (AAPAAEAPAADAKPE).

Belongs to the bacterial ribosomal protein bL31 family. Type A subfamily. As to quaternary structure, part of the 50S ribosomal subunit. The cofactor is Zn(2+).

Functionally, binds the 23S rRNA. The chain is Large ribosomal subunit protein bL31 from Anaeromyxobacter dehalogenans (strain 2CP-C).